The chain runs to 446 residues: Argininosuccinate synthase (446 aa).

ATP is bound by residues 17-25 (AFSGGLDTS) and A43. Y99 is an L-citrulline binding site. Residues G129 and T131 each contribute to the ATP site. T131, N135, and D136 together coordinate L-aspartate. N135 lines the L-citrulline pocket. D136 is a binding site for ATP. 2 residues coordinate L-citrulline: R139 and S192. ATP is bound at residue D194. Positions 201, 203, and 280 each coordinate L-citrulline.

This sequence belongs to the argininosuccinate synthase family. Type 2 subfamily. In terms of assembly, homotetramer.

The protein resides in the cytoplasm. The enzyme catalyses L-citrulline + L-aspartate + ATP = 2-(N(omega)-L-arginino)succinate + AMP + diphosphate + H(+). It participates in amino-acid biosynthesis; L-arginine biosynthesis; L-arginine from L-ornithine and carbamoyl phosphate: step 2/3. The protein is Argininosuccinate synthase of Polaromonas sp. (strain JS666 / ATCC BAA-500).